We begin with the raw amino-acid sequence, 636 residues long: DNA gyrase subunit B (636 aa).

Residues 421-535 (TELFIVEGDS…QGRVYIALPP (115 aa)) enclose the Toprim domain. Residues Glu-427, Asp-500, and Asp-502 each contribute to the Mg(2+) site.

It belongs to the type II topoisomerase GyrB family. In terms of assembly, heterotetramer, composed of two GyrA and two GyrB chains. In the heterotetramer, GyrA contains the active site tyrosine that forms a transient covalent intermediate with DNA, while GyrB binds cofactors and catalyzes ATP hydrolysis. Requires Mg(2+) as cofactor. The cofactor is Mn(2+). It depends on Ca(2+) as a cofactor.

The protein resides in the cytoplasm. The catalysed reaction is ATP-dependent breakage, passage and rejoining of double-stranded DNA.. A type II topoisomerase that negatively supercoils closed circular double-stranded (ds) DNA in an ATP-dependent manner to modulate DNA topology and maintain chromosomes in an underwound state. Negative supercoiling favors strand separation, and DNA replication, transcription, recombination and repair, all of which involve strand separation. Also able to catalyze the interconversion of other topological isomers of dsDNA rings, including catenanes and knotted rings. Type II topoisomerases break and join 2 DNA strands simultaneously in an ATP-dependent manner. The protein is DNA gyrase subunit B of Thermotoga maritima (strain ATCC 43589 / DSM 3109 / JCM 10099 / NBRC 100826 / MSB8).